Consider the following 331-residue polypeptide: UPF0324 membrane protein SAR0338 (331 aa).

The next 11 membrane-spanning stretches (helical) occupy residues Phe-9–Ala-26, Ile-31–Tyr-48, Leu-69–Gly-88, Leu-93–Leu-115, Ala-122–Phe-144, Ser-154–Phe-176, Tyr-183–Gly-202, Leu-217–Met-234, Ile-247–Pro-269, Leu-273–Val-295, and Leu-308–Tyr-330.

It belongs to the UPF0324 family.

The protein localises to the cell membrane. This is UPF0324 membrane protein SAR0338 from Staphylococcus aureus (strain MRSA252).